Reading from the N-terminus, the 31-residue chain is Cytochrome b6-f complex subunit 6 (31 aa).

Residues 4–24 (LTSYFGFLLAALTITLALFIG) form a helical membrane-spanning segment.

Belongs to the PetL family. The 4 large subunits of the cytochrome b6-f complex are cytochrome b6, subunit IV (17 kDa polypeptide, PetD), cytochrome f and the Rieske protein, while the 4 small subunits are PetG, PetL, PetM and PetN. The complex functions as a dimer.

Its subcellular location is the plastid. The protein localises to the chloroplast thylakoid membrane. Functionally, component of the cytochrome b6-f complex, which mediates electron transfer between photosystem II (PSII) and photosystem I (PSI), cyclic electron flow around PSI, and state transitions. PetL is important for photoautotrophic growth as well as for electron transfer efficiency and stability of the cytochrome b6-f complex. The sequence is that of Cytochrome b6-f complex subunit 6 from Triticum aestivum (Wheat).